Here is a 767-residue protein sequence, read N- to C-terminus: Probable beta-D-xylosidase 7 (767 aa).

The N-terminal stretch at Met1–Ser19 is a signal peptide. Residue Asn100 is glycosylated (N-linked (GlcNAc...) asparagine). Residue Asp292 is part of the active site. N-linked (GlcNAc...) asparagine glycosylation is present at Asn643.

This sequence belongs to the glycosyl hydrolase 3 family.

It is found in the secreted. It localises to the extracellular space. The protein localises to the extracellular matrix. In Arabidopsis thaliana (Mouse-ear cress), this protein is Probable beta-D-xylosidase 7 (BXL7).